A 232-amino-acid chain; its full sequence is tRNA pseudouridine synthase B (232 aa).

Asp-53 functions as the Nucleophile in the catalytic mechanism.

It belongs to the pseudouridine synthase TruB family. Type 1 subfamily.

It carries out the reaction uridine(55) in tRNA = pseudouridine(55) in tRNA. Functionally, responsible for synthesis of pseudouridine from uracil-55 in the psi GC loop of transfer RNAs. In Malacoplasma penetrans (strain HF-2) (Mycoplasma penetrans), this protein is tRNA pseudouridine synthase B.